Consider the following 316-residue polypeptide: Insulin-like growth factor-binding protein 2 (316 aa).

The N-terminal stretch at 1-29 (MLPRLGGTALSLLPLLLLLLGTGGRGARA) is a signal peptide. In terms of domain architecture, IGFBP N-terminal spans 31-126 (VLFRCPPCTP…VLGEGTCEKR (96 aa)). 6 cysteine pairs are disulfide-bonded: cysteine 35/cysteine 76, cysteine 38/cysteine 78, cysteine 46/cysteine 79, cysteine 68/cysteine 82, cysteine 90/cysteine 103, and cysteine 97/cysteine 123. Residues 189–217 (QHRQMGKGGKHHLGLEEPKKLRPPPARTP) form a disordered region. One can recognise a Thyroglobulin type-1 domain in the interval 215–297 (RTPCQQELDQ…APTIRGDPEC (83 aa)). 3 disulfides stabilise this stretch: cysteine 218-cysteine 252, cysteine 263-cysteine 274, and cysteine 276-cysteine 297. The Cell attachment site motif lies at 292–294 (RGD).

As to quaternary structure, interacts with IGF1. Interacts with IGF2. Interacts (via RGD motif) with integrin alpha5/ITGA5; this interaction induces cell migration, adhesion or apoptosis according to the context. Interacts with PTPRB; this interaction leads to PTPRB dimerization and inactivation. In terms of processing, cleaved by MMP9 leading to release of free IGF2 from IGFBP2-IGF2 complex, which contributes to enhance the motility and the growth of astrocytes. Post-translationally, O-glycosylated.

It is found in the secreted. In terms of biological role, may have both growth-inhibiting and growth-promoting effects, depending on tissue type; increases IGF-induced DNA synthesis in the uterine epithelium. IGF-binding proteins prolong the half-life of the IGFs and have been shown to either inhibit or stimulate the growth promoting effects of the IGFs on cell culture. They alter the interaction of IGFs with their cell surface receptors. Functionally, multifunctional protein that plays a critical role in regulating the availability of IGFs such as IGF1 and IGF2 to their receptors and thereby regulates IGF-mediated cellular processes including proliferation, differentiation, and apoptosis in a cell-type specific manner. Functions coordinately with receptor protein tyrosine phosphatase beta/PTPRB and the IGF1 receptor to regulate IGF1-mediated signaling by stimulating the phosphorylation of PTEN leading to its inactivation and AKT1 activation. Plays a positive role in cell migration via interaction with integrin alpha5/ITGA5 through an RGD motif. Additionally, interaction with ITGA5/ITGB1 enhances the adhesion of endothelial progenitor cells to endothelial cells. Upon mitochondrial damage, facilitates apoptosis with ITGA5 of podocytes, and then activates the phosphorylation of focal adhesion kinase (FAK)-mediated mitochondrial injury. In Sus scrofa (Pig), this protein is Insulin-like growth factor-binding protein 2 (IGFBP2).